The sequence spans 132 residues: Small ribosomal subunit protein uS11 (132 aa).

Belongs to the universal ribosomal protein uS11 family. As to quaternary structure, part of the 30S ribosomal subunit. Interacts with proteins S7 and S18. Binds to IF-3.

Located on the platform of the 30S subunit, it bridges several disparate RNA helices of the 16S rRNA. Forms part of the Shine-Dalgarno cleft in the 70S ribosome. The chain is Small ribosomal subunit protein uS11 from Alcanivorax borkumensis (strain ATCC 700651 / DSM 11573 / NCIMB 13689 / SK2).